The sequence spans 633 residues: Polypeptide N-acetylgalactosaminyltransferase 3 (633 aa).

The Cytoplasmic segment spans residues 1–19 (MAHLKRLVKLHIKRHYHRK). A helical; Signal-anchor for type II membrane protein transmembrane segment spans residues 20–37 (FWKLGAVIFFFLVVLILM). The Lumenal portion of the chain corresponds to 38-633 (QREVSVQYSK…LQKWIFSQND (596 aa)). The segment at 112-145 (DRPPQDSNAPGASGKPFKITHLSPEEQKEKERGE) is disordered. The segment covering 134–145 (SPEEQKEKERGE) has biased composition (basic and acidic residues). The segment at 184-293 (LPTTSVIIVF…YGWLEPLLAR (110 aa)) is catalytic subdomain A. Residues Asp277 and His279 each contribute to the Mn(2+) site. A glycan (N-linked (GlcNAc...) asparagine) is linked at Asn297. The tract at residues 356–418 (PIKTPTFAGG…PCSVVGHVFR (63 aa)) is catalytic subdomain B. His415 lines the Mn(2+) pocket. An N-linked (GlcNAc...) asparagine glycan is attached at Asn484. In terms of domain architecture, Ricin B-type lectin spans 504-630 (VISGYIKSVG…TDLLQKWIFS (127 aa)). Cys517 and Cys535 are joined by a disulfide. The UDP-N-acetyl-alpha-D-galactosamine site is built by Asp519, Glu522, His536, and Asn541. 2 disulfides stabilise this stretch: Cys561–Cys574 and Cys605–Cys618.

This sequence belongs to the glycosyltransferase 2 family. GalNAc-T subfamily. It depends on Mn(2+) as a cofactor. As to expression, highly expressed in the reproductive tract, principally in the testis and uterus, and to a lesser degree in the cervix with only trace levels in the ovary. Also expressed at high level in sublingual gland, stomach and colon, with more moderate amounts present in the submandibular and parotid gland as well as the kidney.

The protein localises to the golgi apparatus. It is found in the golgi stack membrane. It catalyses the reaction L-seryl-[protein] + UDP-N-acetyl-alpha-D-galactosamine = a 3-O-[N-acetyl-alpha-D-galactosaminyl]-L-seryl-[protein] + UDP + H(+). The catalysed reaction is L-threonyl-[protein] + UDP-N-acetyl-alpha-D-galactosamine = a 3-O-[N-acetyl-alpha-D-galactosaminyl]-L-threonyl-[protein] + UDP + H(+). It participates in protein modification; protein glycosylation. In terms of biological role, catalyzes the initial reaction in O-linked oligosaccharide biosynthesis, the transfer of an N-acetyl-D-galactosamine residue to a serine or threonine residue on the protein receptor. Has activity toward HIV envelope glycoprotein gp120. Has activity towards EA2, MUC2 and MUC5. Probably glycosylates fibronectin in vivo. Glycosylates FGF23. This is Polypeptide N-acetylgalactosaminyltransferase 3 (Galnt3) from Mus musculus (Mouse).